The sequence spans 135 residues: Phosphomevalonate dehydratase small subunit (135 aa).

Ser-67 functions as the Proton acceptor in the catalytic mechanism.

It belongs to the AcnX type II small subunit family. As to quaternary structure, heterodimer composed of a large subunit (PMDh-L) and a small subunit (PMDh-S).

It carries out the reaction (R)-5-phosphomevalonate = (2E)-3-methyl-5-phosphooxypent-2-enoate + H2O. The protein operates within isoprenoid biosynthesis; isopentenyl diphosphate biosynthesis via mevalonate pathway. Its function is as follows. Component of a hydro-lyase that catalyzes the dehydration of mevalonate 5-phosphate (MVA5P) to form trans-anhydromevalonate 5-phosphate (tAHMP). Involved in the archaeal mevalonate (MVA) pathway, which provides fundamental precursors for isoprenoid biosynthesis, such as isopentenyl diphosphate (IPP) and dimethylallyl diphosphate (DMAPP). This is Phosphomevalonate dehydratase small subunit from Methanopyrus kandleri (strain AV19 / DSM 6324 / JCM 9639 / NBRC 100938).